Consider the following 173-residue polypeptide: Putative metal-dependent hydrolase BCE_2729 (173 aa).

3 residues coordinate Zn(2+): histidine 65, histidine 156, and histidine 160.

Belongs to the metal hydrolase YfiT family. As to quaternary structure, homodimer. Requires Zn(2+) as cofactor.

The protein resides in the cytoplasm. Functionally, possible metal-dependent hydrolase. The chain is Putative metal-dependent hydrolase BCE_2729 from Bacillus cereus (strain ATCC 10987 / NRS 248).